A 241-amino-acid chain; its full sequence is ATP synthase subunit a (241 aa).

5 consecutive transmembrane segments (helical) span residues 30 to 50, 91 to 111, 128 to 148, 193 to 213, and 214 to 234; these read GQVFLTSWILLGALLVFISLG, FIGTLFLFVFVSNWGGALIPW, INTTIALALLVSLSYFYAGLS, LVVGVLVFLVPLILPIPVMFL, and GLFTSAIQALIFATLAAYYIG.

The protein belongs to the ATPase A chain family. F-type ATPases have 2 components, CF(1) - the catalytic core - and CF(0) - the membrane proton channel. CF(1) has five subunits: alpha(3), beta(3), gamma(1), delta(1), epsilon(1). CF(0) has four main subunits: a, b, b' and c.

The protein localises to the cellular thylakoid membrane. Its function is as follows. Key component of the proton channel; it plays a direct role in the translocation of protons across the membrane. This is ATP synthase subunit a from Prochlorococcus marinus (strain MIT 9215).